The following is a 546-amino-acid chain: Cation/calcium exchanger 5 (546 aa).

A run of 13 helical transmembrane segments spans residues 13–33 (ALCLTLISILIFFFLTTTTIP), 88–108 (NLFFSIPILSLLILLHFYILI), 134–154 (AVTLLALGNGAPDVFASVAAL), 163–183 (FGAILSAGTFVSAFVVGFVAI), 194–214 (SFVRDVLFYLIAALFLFYVYL), 218–238 (IFVWQAIGFVGFYIFFVGFVF), 323–343 (SANIVFCPFALLYTCNSFVQL), 356–376 (LPLWLVVLFMTSSLAFLHFTV), 388–408 (VIVVAFIMSVFWISTIAGELL), 423–445 (ALLGLTVLAWGNSVGDLVADVAV), 455–475 (MAGCFAGPMFNMLVGLGSALV), 492–512 (VGIVIAFVFLLLSLMGSLLVI), and 522–542 (FWGICLVGLYVAFTFVSLIIA).

The protein belongs to the Ca(2+):cation antiporter (CaCA) (TC 2.A.19) family. Cation/calcium exchanger (CCX) subfamily.

The protein localises to the cell membrane. In terms of biological role, membrane-localized H(+)-dependent K(+) and Na(+) transporter. The polypeptide is Cation/calcium exchanger 5 (CCX5) (Arabidopsis thaliana (Mouse-ear cress)).